Reading from the N-terminus, the 585-residue chain is Arginine--tRNA ligase (585 aa).

A 'HIGH' region motif is present at residues 131–141 (ANPTGPMHVGH).

It belongs to the class-I aminoacyl-tRNA synthetase family. In terms of assembly, monomer.

The protein resides in the cytoplasm. The catalysed reaction is tRNA(Arg) + L-arginine + ATP = L-arginyl-tRNA(Arg) + AMP + diphosphate. The sequence is that of Arginine--tRNA ligase from Brucella melitensis biotype 1 (strain ATCC 23456 / CCUG 17765 / NCTC 10094 / 16M).